A 210-amino-acid chain; its full sequence is Ribosomal RNA large subunit methyltransferase E (210 aa).

S-adenosyl-L-methionine is bound by residues Gly60, Trp62, Asp85, Asp101, and Asp126. Lys166 functions as the Proton acceptor in the catalytic mechanism.

The protein belongs to the class I-like SAM-binding methyltransferase superfamily. RNA methyltransferase RlmE family.

It localises to the cytoplasm. It carries out the reaction uridine(2552) in 23S rRNA + S-adenosyl-L-methionine = 2'-O-methyluridine(2552) in 23S rRNA + S-adenosyl-L-homocysteine + H(+). In terms of biological role, specifically methylates the uridine in position 2552 of 23S rRNA at the 2'-O position of the ribose in the fully assembled 50S ribosomal subunit. This chain is Ribosomal RNA large subunit methyltransferase E, found in Bordetella pertussis (strain Tohama I / ATCC BAA-589 / NCTC 13251).